We begin with the raw amino-acid sequence, 382 residues long: Flap endonuclease 1 (382 aa).

Residues 1 to 104 (MGIKGLSQVI…GELEKRSERR (104 aa)) form an N-domain region. Mg(2+) is bound at residue Asp-34. Residues Arg-47 and Arg-70 each coordinate DNA. Mg(2+) contacts are provided by Asp-86, Glu-158, Glu-160, Asp-179, and Asp-181. Residues 122–253 (EAEKFERRLV…KKAVELIRQH (132 aa)) are I-domain. Glu-158 contacts DNA. Residues Gly-231 and Asp-233 each coordinate DNA. Residue Asp-233 coordinates Mg(2+). The segment at 336-344 (TQGRIDSFF) is interaction with PCNA. Positions 358–382 (KRKAEEAEKAKKGAKKGGPPKKRAK) are disordered. Basic and acidic residues predominate over residues 359-368 (RKAEEAEKAK). The segment covering 369–382 (KGAKKGGPPKKRAK) has biased composition (basic residues).

It belongs to the XPG/RAD2 endonuclease family. FEN1 subfamily. Interacts with PCNA. Three molecules of crn-1 bind to one PCNA trimer with each molecule binding to one PCNA monomer. PCNA stimulates the nuclease activity without altering cleavage specificity. Interacts with cps-6. Mg(2+) serves as cofactor. Post-translationally, phosphorylated. Phosphorylation upon DNA damage induces relocalization to the nuclear plasma.

The protein resides in the nucleus. It localises to the nucleolus. The protein localises to the nucleoplasm. It is found in the mitochondrion. In terms of biological role, structure-specific nuclease with 5'-flap endonuclease and 5'-3' exonuclease activities involved in DNA replication and repair. During DNA replication, cleaves the 5'-overhanging flap structure that is generated by displacement synthesis when DNA polymerase encounters the 5'-end of a downstream Okazaki fragment. It enters the flap from the 5'-end and then tracks to cleave the flap base, leaving a nick for ligation. Also involved in the long patch base excision repair (LP-BER) pathway, by cleaving within the apurinic/apyrimidinic (AP) site-terminated flap. Acts as a genome stabilization factor that prevents flaps from equilibrating into structures that lead to duplications and deletions. Also possesses 5'-3' exonuclease activity on nicked or gapped double-stranded DNA, and exhibits RNase H activity. Also involved in replication and repair of rDNA and in repairing mitochondrial DNA. Can associate and cooperate with cps-6 to promote stepwise DNA fragmentation, utilizing the endonuclease activity of cps-6 and both of its own 5'-3' exonuclease activity and gap-dependent endonuclease activity. May play a critical role in switching the state of cells from DNA replication/repair to DNA degradation during apoptosis. The sequence is that of Flap endonuclease 1 from Caenorhabditis elegans.